Reading from the N-terminus, the 485-residue chain is GTPase Obg (485 aa).

Residues 2–159 (PRFVDRVVIH…RELTLELKTV (158 aa)) enclose the Obg domain. The OBG-type G domain occupies 160 to 341 (ADVGLIGFPS…FIFALWDMVR (182 aa)). Residues 166-173 (GFPSAGKS), 191-195 (FTTLV), 212-215 (DVPG), 292-295 (NKID), and 322-324 (STV) contribute to the GTP site. Residues S173 and T193 each coordinate Mg(2+). The region spanning 359 to 437 (PIAVDETGFS…IGDMTFDWEP (79 aa)) is the OCT domain. Residues 439-485 (TPAGVDVQMSGRGTDTRLEQTDRVSAAERKIARRERRQSTDEPGGEE) are disordered. Basic and acidic residues predominate over residues 452 to 468 (TDTRLEQTDRVSAAERK).

The protein belongs to the TRAFAC class OBG-HflX-like GTPase superfamily. OBG GTPase family. As to quaternary structure, monomer. Mg(2+) serves as cofactor.

The protein resides in the cytoplasm. An essential GTPase which binds GTP, GDP and possibly (p)ppGpp with moderate affinity, with high nucleotide exchange rates and a fairly low GTP hydrolysis rate. Plays a role in control of the cell cycle, stress response, ribosome biogenesis and in those bacteria that undergo differentiation, in morphogenesis control. The protein is GTPase Obg of Mycobacterium sp. (strain MCS).